A 352-amino-acid polypeptide reads, in one-letter code: Cell division protein ZipA (352 aa).

The Periplasmic portion of the chain corresponds to 1–6 (MKDLQL). A helical membrane pass occupies residues 7–27 (VLFVLGAIAIIAVLVHGFWSI). Residues 28–352 (RKQQPKSMKQ…KDYLRRLNAA (325 aa)) lie on the Cytoplasmic side of the membrane. Disordered stretches follow at residues 78-120 (KPVL…HVEP) and 138-160 (PAPTASTSMNTPKKIFNPSTSTA). Residues 83–105 (TNLSQKPHSGTTKLTDTPLQDSL) show a composition bias toward polar residues. Positions 111–120 (HKTEPEHVEP) are enriched in basic and acidic residues. Over residues 141-160 (TASTSMNTPKKIFNPSTSTA) the composition is skewed to polar residues.

This sequence belongs to the ZipA family. In terms of assembly, interacts with FtsZ via their C-terminal domains.

It is found in the cell inner membrane. Functionally, essential cell division protein that stabilizes the FtsZ protofilaments by cross-linking them and that serves as a cytoplasmic membrane anchor for the Z ring. Also required for the recruitment to the septal ring of downstream cell division proteins. This Shewanella frigidimarina (strain NCIMB 400) protein is Cell division protein ZipA.